A 395-amino-acid polypeptide reads, in one-letter code: Digeranylgeranylglycerophospholipid reductase (395 aa).

FAD is bound by residues Ala15, Asp34, Cys45, Ala46, Gly48, Arg97, Ala121, Asp276, and Gly288. Arg329 and Gly365 together coordinate a 2,3-bis-O-(geranylgeranyl)-sn-glycerol 1-phospholipid.

Belongs to the geranylgeranyl reductase family. DGGGPL reductase subfamily. FAD serves as cofactor.

The enzyme catalyses a 2,3-bis-O-phytanyl-sn-glycerol 1-phospholipid + 8 A = a 2,3-bis-O-(geranylgeranyl)-sn-glycerol 1-phospholipid + 8 AH2. The catalysed reaction is 2,3-bis-O-(phytanyl)-sn-glycerol 1-phosphate + 8 A = 2,3-bis-O-(geranylgeranyl)-sn-glycerol 1-phosphate + 8 AH2. It carries out the reaction CDP-2,3-bis-O-(geranylgeranyl)-sn-glycerol + 8 AH2 = CDP-2,3-bis-O-(phytanyl)-sn-glycerol + 8 A. It catalyses the reaction archaetidylserine + 8 AH2 = 2,3-bis-O-phytanyl-sn-glycero-3-phospho-L-serine + 8 A. The protein operates within membrane lipid metabolism; glycerophospholipid metabolism. Its function is as follows. Is involved in the reduction of 2,3-digeranylgeranylglycerophospholipids (unsaturated archaeols) into 2,3-diphytanylglycerophospholipids (saturated archaeols) in the biosynthesis of archaeal membrane lipids. Catalyzes the formation of archaetidic acid (2,3-di-O-phytanyl-sn-glyceryl phosphate) from 2,3-di-O-geranylgeranylglyceryl phosphate (DGGGP) via the hydrogenation of each double bond of the isoprenoid chains. Is also probably able to reduce double bonds of geranyl groups in CDP-2,3-bis-O-(geranylgeranyl)-sn-glycerol and archaetidylserine, thus acting at various stages in the biosynthesis of archaeal membrane lipids. The protein is Digeranylgeranylglycerophospholipid reductase of Thermococcus gammatolerans (strain DSM 15229 / JCM 11827 / EJ3).